The sequence spans 230 residues: U2 small nuclear ribonucleoprotein A' (230 aa).

LRR repeat units follow at residues Ser-15 to Thr-36, Gly-48 to Glu-69, His-71 to Glu-92, Thr-93 to Ala-114, and Lys-115 to Lys-136. An LRRCT domain is found at Asn-149–Met-187.

This sequence belongs to the U2 small nuclear ribonucleoprotein A family. In terms of assembly, associated with the spliceosome.

It is found in the nucleus. In terms of biological role, involved in pre-mRNA splicing. This chain is U2 small nuclear ribonucleoprotein A' (LEA1), found in Yarrowia lipolytica (strain CLIB 122 / E 150) (Yeast).